We begin with the raw amino-acid sequence, 67 residues long: Large ribosomal subunit protein bL35 (67 aa).

Basic residues predominate over residues 1-16 (MPKMKTKSSAKKRFRV). The tract at residues 1–24 (MPKMKTKSSAKKRFRVRPGGTVKR) is disordered.

This sequence belongs to the bacterial ribosomal protein bL35 family.

The chain is Large ribosomal subunit protein bL35 from Paracidovorax citrulli (strain AAC00-1) (Acidovorax citrulli).